The primary structure comprises 257 residues: Ciliary microtubule associated protein 1B (257 aa).

STPGR repeat units follow at residues Pro-103–Arg-129, Pro-182–Arg-207, and Pro-218–Arg-243.

Belongs to the CIMAP family.

It is found in the cell projection. Its subcellular location is the cilium. It localises to the flagellum. In Danio rerio (Zebrafish), this protein is Ciliary microtubule associated protein 1B (cimap1b).